The sequence spans 76 residues: Putative snRNP Sm-like protein (76 aa).

The 73-residue stretch at 4-76 (RPLDVIHRSL…VLAISPVDIE (73 aa)) folds into the Sm domain.

It belongs to the snRNP Sm proteins family.

The sequence is that of Putative snRNP Sm-like protein from Thermococcus gammatolerans (strain DSM 15229 / JCM 11827 / EJ3).